The sequence spans 333 residues: Cytochrome f (333 aa).

A signal peptide spans 1–37 (MRNSCKKARRTRPLKATIQALLVAIATMTFFFTSDIA). At 38–298 (LPQSAAAYPF…TEIVLQDPNR (261 aa)) the chain is on the cytoplasmic side. Heme contacts are provided by tyrosine 45, cysteine 66, cysteine 69, and histidine 70. A helical transmembrane segment spans residues 299–319 (VKWMIAFICLVMLAQLMLILK). The Lumenal, thylakoid segment spans residues 320-333 (KKQVEKVQAAEMNF).

This sequence belongs to the cytochrome f family. As to quaternary structure, the 4 large subunits of the cytochrome b6-f complex are cytochrome b6, subunit IV (17 kDa polypeptide, PetD), cytochrome f and the Rieske protein, while the 4 small subunits are PetG, PetL, PetM and PetN. The complex functions as a dimer. Heme serves as cofactor.

Its subcellular location is the cellular thylakoid membrane. In terms of biological role, component of the cytochrome b6-f complex, which mediates electron transfer between photosystem II (PSII) and photosystem I (PSI), cyclic electron flow around PSI, and state transitions. The chain is Cytochrome f (petA) from Mastigocladus laminosus (Fischerella sp.).